The chain runs to 187 residues: Large ribosomal subunit protein bL9 (187 aa).

Residues 168-187 form a disordered region; sequence EEAPAEEDVAAEETSEAAEA.

This sequence belongs to the bacterial ribosomal protein bL9 family.

In terms of biological role, binds to the 23S rRNA. The chain is Large ribosomal subunit protein bL9 from Paramagnetospirillum magneticum (strain ATCC 700264 / AMB-1) (Magnetospirillum magneticum).